Consider the following 115-residue polypeptide: Small ribosomal subunit protein uS14m (115 aa).

This sequence belongs to the universal ribosomal protein uS14 family. In terms of assembly, component of the mitochondrial small ribosomal subunit (mt-SSU). Mature yeast 74S mitochondrial ribosomes consist of a small (37S) and a large (54S) subunit. The 37S small subunit contains a 15S ribosomal RNA (15S mt-rRNA) and 34 different proteins. The 54S large subunit contains a 21S rRNA (21S mt-rRNA) and 46 different proteins.

It is found in the mitochondrion. Component of the mitochondrial ribosome (mitoribosome), a dedicated translation machinery responsible for the synthesis of mitochondrial genome-encoded proteins, including at least some of the essential transmembrane subunits of the mitochondrial respiratory chain. The mitoribosomes are attached to the mitochondrial inner membrane and translation products are cotranslationally integrated into the membrane. The polypeptide is Small ribosomal subunit protein uS14m (MRP2) (Saccharomyces cerevisiae (strain ATCC 204508 / S288c) (Baker's yeast)).